The primary structure comprises 286 residues: tRNA uridine(34) hydroxylase (286 aa).

Positions 130-225 constitute a Rhodanese domain; that stretch reads RGDDVVFFDG…YGETFGDRGL (96 aa). The active-site Cysteine persulfide intermediate is Cys-185.

It belongs to the TrhO family.

The enzyme catalyses uridine(34) in tRNA + AH2 + O2 = 5-hydroxyuridine(34) in tRNA + A + H2O. In terms of biological role, catalyzes oxygen-dependent 5-hydroxyuridine (ho5U) modification at position 34 in tRNAs. This is tRNA uridine(34) hydroxylase from Rhodococcus erythropolis (strain PR4 / NBRC 100887).